We begin with the raw amino-acid sequence, 104 residues long: Ribonuclease P protein component 4 (104 aa).

Zn(2+) contacts are provided by Cys-57, Cys-60, Cys-83, and Cys-86.

This sequence belongs to the eukaryotic/archaeal RNase P protein component 4 family. Consists of a catalytic RNA component and at least 4-5 protein subunits. Zn(2+) serves as cofactor.

The protein resides in the cytoplasm. The catalysed reaction is Endonucleolytic cleavage of RNA, removing 5'-extranucleotides from tRNA precursor.. Its function is as follows. Part of ribonuclease P, a protein complex that generates mature tRNA molecules by cleaving their 5'-ends. This is Ribonuclease P protein component 4 from Saccharolobus islandicus (strain M.14.25 / Kamchatka #1) (Sulfolobus islandicus).